The primary structure comprises 187 residues: UPF0301 protein CKO_04323 (187 aa).

Belongs to the UPF0301 (AlgH) family.

This Citrobacter koseri (strain ATCC BAA-895 / CDC 4225-83 / SGSC4696) protein is UPF0301 protein CKO_04323.